The chain runs to 633 residues: uncharacterized protein (633 aa).

The segment at 1–188 (MNNRGGFSHP…GQSSFYNSSY (188 aa)) is disordered. 2 stretches are compositionally biased toward low complexity: residues 32–80 (GQPQ…GGNN) and 104–148 (NNGN…TNSR). Over residues 152–178 (RGGSSRGGSSRGGNSGSSRGGSRGGYR) the composition is skewed to gly residues. Positions 580–607 (KSKNWTVDQASDELKKLSKNLRLLVSKH) form a coiled coil. The tract at residues 611–633 (TKFQPPSADHTTQFEQDDEEEEN) is disordered.

This is an uncharacterized protein from Dictyostelium discoideum (Social amoeba).